A 181-amino-acid polypeptide reads, in one-letter code: Adenine phosphoribosyltransferase (181 aa).

It belongs to the purine/pyrimidine phosphoribosyltransferase family. Homodimer.

It localises to the cytoplasm. It catalyses the reaction AMP + diphosphate = 5-phospho-alpha-D-ribose 1-diphosphate + adenine. It participates in purine metabolism; AMP biosynthesis via salvage pathway; AMP from adenine: step 1/1. In terms of biological role, catalyzes a salvage reaction resulting in the formation of AMP, that is energically less costly than de novo synthesis. The chain is Adenine phosphoribosyltransferase from Vibrio campbellii (strain ATCC BAA-1116).